Consider the following 318-residue polypeptide: Oxidoreductase swnN (318 aa).

It belongs to the NmrA-type oxidoreductase family. Isoflavone reductase subfamily.

Its pathway is mycotoxin biosynthesis. Aminotransferase; part of the gene cluster that mediates the biosynthesis of swainsonine (SW), a cytotoxic fungal alkaloid and a potential cancer therapy drug. Swainsonine production occurs via a multibranched pathway and is dispensable for fungal colonization of plants and infection of insect hosts. The first step of swainsonine biosynthesis is the production of the precursor pipecolic acid (PA) via conversion of L-lysine (Lys) to 1-piperideine-6-carboxylate (P6C) by the aminotransferase swnA, the latter being further reduced to PA by the reductase swnR. The PKS-NRPS hybrid synthetase swnK uptakes and condensates PA and malonyl-CoA with and without skipping of the ketoreductase (KR) domain in order to produce 3 intermediates, 1-oxoindolizidine, (1S)-1-hydroxyindolizin, and (1R)-1-hydroxyindolizine; with the transisomer (1S)-1-hydroxyindolizin being predominant. The terminal thioester reductase (TE) domain of swnK is involved in reduction of the thioester bond to release the intermediate aldehydes. The oxidoreductase swnN could contribute to the reduction of 1-oxoindolizidine to (1S)-1-hydroxyindolizin and (1R)-1-hydroxyindolizine, contributing to the major route of SW production. The dioxygenase swnH2 would be responsible for the oxidization of (1R)-1-hydroxyindolizine into (1R,2S)-1,2-dihydroxyindolizine and of (1S)-1-hydroxyindolizin to yield both (1R,2S)-1,2-dihydroxyindolizine and (1S,2S)-1,2-dihydroxyindolizine. The dioxygenase swnH1 then performs the conversion of the 1,2-dihydroxyindolizine epimers to SW. The protein is Oxidoreductase swnN of Arthroderma benhamiae (strain ATCC MYA-4681 / CBS 112371) (Trichophyton mentagrophytes).